Here is a 555-residue protein sequence, read N- to C-terminus: Formate--tetrahydrofolate ligase (555 aa).

64 to 71 is an ATP binding site; that stretch reads TKAGIGKT.

It belongs to the formate--tetrahydrofolate ligase family.

It carries out the reaction (6S)-5,6,7,8-tetrahydrofolate + formate + ATP = (6R)-10-formyltetrahydrofolate + ADP + phosphate. The protein operates within one-carbon metabolism; tetrahydrofolate interconversion. In Bacteroides thetaiotaomicron (strain ATCC 29148 / DSM 2079 / JCM 5827 / CCUG 10774 / NCTC 10582 / VPI-5482 / E50), this protein is Formate--tetrahydrofolate ligase.